The sequence spans 248 residues: DNA repair protein RecO (248 aa).

It belongs to the RecO family.

In terms of biological role, involved in DNA repair and RecF pathway recombination. The protein is DNA repair protein RecO of Streptomyces avermitilis (strain ATCC 31267 / DSM 46492 / JCM 5070 / NBRC 14893 / NCIMB 12804 / NRRL 8165 / MA-4680).